Here is a 424-residue protein sequence, read N- to C-terminus: Arginine biosynthesis bifunctional protein ArgJ (424 aa).

Residues Thr166, Lys192, Thr203, Glu290, Asn419, and Thr424 each contribute to the substrate site. Thr203 acts as the Nucleophile in catalysis.

This sequence belongs to the ArgJ family. Heterotetramer of two alpha and two beta chains.

The protein resides in the cytoplasm. The enzyme catalyses N(2)-acetyl-L-ornithine + L-glutamate = N-acetyl-L-glutamate + L-ornithine. It catalyses the reaction L-glutamate + acetyl-CoA = N-acetyl-L-glutamate + CoA + H(+). It functions in the pathway amino-acid biosynthesis; L-arginine biosynthesis; L-ornithine and N-acetyl-L-glutamate from L-glutamate and N(2)-acetyl-L-ornithine (cyclic): step 1/1. It participates in amino-acid biosynthesis; L-arginine biosynthesis; N(2)-acetyl-L-ornithine from L-glutamate: step 1/4. Its function is as follows. Catalyzes two activities which are involved in the cyclic version of arginine biosynthesis: the synthesis of N-acetylglutamate from glutamate and acetyl-CoA as the acetyl donor, and of ornithine by transacetylation between N(2)-acetylornithine and glutamate. This is Arginine biosynthesis bifunctional protein ArgJ from Colwellia psychrerythraea (strain 34H / ATCC BAA-681) (Vibrio psychroerythus).